The primary structure comprises 348 residues: Tripartite motif-containing protein 16-like protein (348 aa).

A B30.2/SPRY domain is found at 139-337 (YWTSKPEPST…RIVDLGEEPE (199 aa)).

Belongs to the TRIM/RBCC family.

It is found in the cytoplasm. This Homo sapiens (Human) protein is Tripartite motif-containing protein 16-like protein (TRIM16L).